A 319-amino-acid polypeptide reads, in one-letter code: Acetyl-coenzyme A carboxylase carboxyl transferase subunit alpha (319 aa).

Residues 43–296 form the CoA carboxyltransferase C-terminal domain; it reads LRDKSIELTR…KKQLLFDLSE (254 aa).

This sequence belongs to the AccA family. As to quaternary structure, acetyl-CoA carboxylase is a heterohexamer composed of biotin carboxyl carrier protein (AccB), biotin carboxylase (AccC) and two subunits each of ACCase subunit alpha (AccA) and ACCase subunit beta (AccD).

The protein localises to the cytoplasm. The catalysed reaction is N(6)-carboxybiotinyl-L-lysyl-[protein] + acetyl-CoA = N(6)-biotinyl-L-lysyl-[protein] + malonyl-CoA. The protein operates within lipid metabolism; malonyl-CoA biosynthesis; malonyl-CoA from acetyl-CoA: step 1/1. Component of the acetyl coenzyme A carboxylase (ACC) complex. First, biotin carboxylase catalyzes the carboxylation of biotin on its carrier protein (BCCP) and then the CO(2) group is transferred by the carboxyltransferase to acetyl-CoA to form malonyl-CoA. The polypeptide is Acetyl-coenzyme A carboxylase carboxyl transferase subunit alpha (Baumannia cicadellinicola subsp. Homalodisca coagulata).